Here is a 99-residue protein sequence, read N- to C-terminus: Protein Tat (99 aa).

Residues 1–24 are interaction with human CREBBP; that stretch reads MDPVDPKLEPWNHPGSQPQTACNN. Residues 1–48 form a transactivation region; that stretch reads MDPVDPKLEPWNHPGSQPQTACNNCYCKKCCYHCQMCFLKKGLGISYG. Zn(2+) contacts are provided by cysteine 22, cysteine 25, and cysteine 27. The interval 22–37 is cysteine-rich; that stretch reads CNNCYCKKCCYHCQMC. Lysine 28 is subject to N6-acetyllysine; by host PCAF. Cysteine 30, histidine 33, cysteine 34, and cysteine 37 together coordinate Zn(2+). The core stretch occupies residues 38 to 48; it reads FLKKGLGISYG. The span at 48 to 58 shows a compositional bias: basic residues; that stretch reads GRKKRSQRHRT. Positions 48-99 are disordered; it reads GRKKRSQRHRTPASLQDHQNSISKQPLSRTHGDPTGPKEQKKEVASKTETDP. Positions 49–57 match the Nuclear localization signal, RNA-binding (TAR), and protein transduction motif; that stretch reads RKKRSQRHR. Positions 49 to 86 are interaction with the host capping enzyme RNGTT; it reads RKKRSQRHRTPASLQDHQNSISKQPLSRTHGDPTGPKE. Residues lysine 50 and lysine 51 each carry the N6-acetyllysine; by host EP300 and GCN5L2 modification. An Asymmetric dimethylarginine; by host PRMT6 modification is found at arginine 52. The segment covering 60-75 has biased composition (polar residues); it reads ASLQDHQNSISKQPLS. Residue lysine 71 forms a Glycyl lysine isopeptide (Lys-Gly) (interchain with G-Cter in ubiquitin) linkage. The segment covering 77–99 has biased composition (basic and acidic residues); that stretch reads THGDPTGPKEQKKEVASKTETDP.

This sequence belongs to the lentiviruses Tat family. As to quaternary structure, interacts with host CCNT1. Associates with the P-TEFb complex composed at least of Tat, P-TEFb (CDK9 and CCNT1), TAR RNA, RNA Pol II. Recruits the HATs CREBBP, TAF1/TFIID, EP300, PCAF and GCN5L2. Interacts with host KAT5/Tip60; this interaction targets the latter to degradation. Interacts with the host deacetylase SIRT1. Interacts with host capping enzyme RNGTT; this interaction stimulates RNGTT. Binds to host KDR, and to the host integrins ITGAV/ITGB3 and ITGA5/ITGB1. Interacts with host KPNB1/importin beta-1 without previous binding to KPNA1/importin alpha-1. Interacts with EIF2AK2. Interacts with host nucleosome assembly protein NAP1L1; this interaction may be required for the transport of Tat within the nucleus, since the two proteins interact at the nuclear rim. Interacts with host C1QBP/SF2P32; this interaction involves lysine-acetylated Tat. Interacts with the host chemokine receptors CCR2, CCR3 and CXCR4. Interacts with host DPP4/CD26; this interaction may trigger an anti-proliferative effect. Interacts with host LDLR. Interacts with the host extracellular matrix metalloproteinase MMP1. Interacts with host PRMT6; this interaction mediates Tat's methylation. Interacts with, and is ubiquitinated by MDM2/Hdm2. Interacts with host PSMC3 and HTATIP2. Interacts with STAB1; this interaction may overcome SATB1-mediated repression of IL2 and IL2RA (interleukin) in T cells by binding to the same domain than HDAC1. Interacts (when acetylated) with human CDK13, thereby increasing HIV-1 mRNA splicing and promoting the production of the doubly spliced HIV-1 protein Nef. Interacts with host TBP; this interaction modulates the activity of transcriptional pre-initiation complex. Interacts with host RELA. Interacts with host PLSCR1; this interaction negatively regulates Tat transactivation activity by altering its subcellular distribution. Post-translationally, asymmetrical arginine methylation by host PRMT6 seems to diminish the transactivation capacity of Tat and affects the interaction with host CCNT1. In terms of processing, acetylation by EP300, CREBBP, GCN5L2/GCN5 and PCAF regulates the transactivation activity of Tat. EP300-mediated acetylation of Lys-50 promotes dissociation of Tat from the TAR RNA through the competitive binding to PCAF's bromodomain. In addition, the non-acetylated Tat's N-terminus can also interact with PCAF. PCAF-mediated acetylation of Lys-28 enhances Tat's binding to CCNT1. Lys-50 is deacetylated by SIRT1. Polyubiquitination by host MDM2 does not target Tat to degradation, but activates its transactivation function and fosters interaction with CCNT1 and TAR RNA. Post-translationally, phosphorylated by EIF2AK2 on serine and threonine residues adjacent to the basic region important for TAR RNA binding and function. Phosphorylation of Tat by EIF2AK2 is dependent on the prior activation of EIF2AK2 by dsRNA.

It localises to the host nucleus. The protein resides in the host nucleolus. The protein localises to the host cytoplasm. Its subcellular location is the secreted. Transcriptional activator that increases RNA Pol II processivity, thereby increasing the level of full-length viral transcripts. Recognizes a hairpin structure at the 5'-LTR of the nascent viral mRNAs referred to as the transactivation responsive RNA element (TAR) and recruits the cyclin T1-CDK9 complex (P-TEFb complex) that will in turn hyperphosphorylate the RNA polymerase II to allow efficient elongation. The CDK9 component of P-TEFb and other Tat-activated kinases hyperphosphorylate the C-terminus of RNA Pol II that becomes stabilized and much more processive. Other factors such as HTATSF1/Tat-SF1, SUPT5H/SPT5, and HTATIP2 are also important for Tat's function. Besides its effect on RNA Pol II processivity, Tat induces chromatin remodeling of proviral genes by recruiting the histone acetyltransferases (HATs) CREBBP, EP300 and PCAF to the chromatin. This also contributes to the increase in proviral transcription rate, especially when the provirus integrates in transcriptionally silent region of the host genome. To ensure maximal activation of the LTR, Tat mediates nuclear translocation of NF-kappa-B by interacting with host RELA. Through its interaction with host TBP, Tat may also modulate transcription initiation. Tat can reactivate a latently infected cell by penetrating in it and transactivating its LTR promoter. In the cytoplasm, Tat is thought to act as a translational activator of HIV-1 mRNAs. In terms of biological role, extracellular circulating Tat can be endocytosed by surrounding uninfected cells via the binding to several surface receptors such as CD26, CXCR4, heparan sulfate proteoglycans (HSPG) or LDLR. Neurons are rarely infected, but they internalize Tat via their LDLR. Through its interaction with nuclear HATs, Tat is potentially able to control the acetylation-dependent cellular gene expression. Modulates the expression of many cellular genes involved in cell survival, proliferation or in coding for cytokines or cytokine receptors. Tat plays a role in T-cell and neurons apoptosis. Tat induced neurotoxicity and apoptosis probably contribute to neuroAIDS. Circulating Tat also acts as a chemokine-like and/or growth factor-like molecule that binds to specific receptors on the surface of the cells, affecting many cellular pathways. In the vascular system, Tat binds to ITGAV/ITGB3 and ITGA5/ITGB1 integrins dimers at the surface of endothelial cells and competes with bFGF for heparin-binding sites, leading to an excess of soluble bFGF. The chain is Protein Tat from Homo sapiens (Human).